Consider the following 415-residue polypeptide: L-cysteine:1D-myo-inositol 2-amino-2-deoxy-alpha-D-glucopyranoside ligase (415 aa).

A Zn(2+)-binding site is contributed by C43. L-cysteinyl-5'-AMP is bound by residues 43–46, T58, and 81–83; these read CGIT and NVT. Positions 45 to 55 match the 'HIGH' region motif; the sequence is ITPYDATHLGH. Residues 188 to 193 carry the 'ERGGDP' region motif; it reads ERGGDP. An L-cysteinyl-5'-AMP-binding site is contributed by W229. C233 contacts Zn(2+). L-cysteinyl-5'-AMP is bound at residue 251-253; it reads GSD. H258 is a Zn(2+) binding site. V285 is an L-cysteinyl-5'-AMP binding site. Positions 291–295 match the 'KMSKS' region motif; that stretch reads KMSKS.

It belongs to the class-I aminoacyl-tRNA synthetase family. MshC subfamily. As to quaternary structure, monomer. Zn(2+) serves as cofactor.

It carries out the reaction 1D-myo-inositol 2-amino-2-deoxy-alpha-D-glucopyranoside + L-cysteine + ATP = 1D-myo-inositol 2-(L-cysteinylamino)-2-deoxy-alpha-D-glucopyranoside + AMP + diphosphate + H(+). In terms of biological role, catalyzes the ATP-dependent condensation of GlcN-Ins and L-cysteine to form L-Cys-GlcN-Ins. This Cellulomonas flavigena (strain ATCC 482 / DSM 20109 / BCRC 11376 / JCM 18109 / NBRC 3775 / NCIMB 8073 / NRS 134) protein is L-cysteine:1D-myo-inositol 2-amino-2-deoxy-alpha-D-glucopyranoside ligase.